Consider the following 498-residue polypeptide: Acetylcholine receptor subunit alpha-type acr-16 (498 aa).

A signal peptide spans 1 to 19 (MSVCTLLISCAILAAPTLG). Over 20 to 230 (SLQERRLYED…FYLHMRRRTL (211 aa)) the chain is Extracellular. Residues Asn43 and Asn93 are each glycosylated (N-linked (GlcNAc...) asparagine). 2 disulfides stabilise this stretch: Cys147–Cys161 and Cys211–Cys212. 3 helical membrane-spanning segments follow: residues 231–252 (YYGFNLIMPCILTTLMTLLGFT), 261–279 (ITLQITVLLSICFFLSIVS), and 295–314 (FFTCCMIVVTASTVFTVYVL). The Cytoplasmic portion of the chain corresponds to 315-472 (NLHYRTPETH…WKFAAMVVDR (158 aa)). The chain crosses the membrane as a helical span at residues 473–493 (LCLYVFTIFIIVSTIGIFWSA).

It belongs to the ligand-gated ion channel (TC 1.A.9) family. Acetylcholine receptor (TC 1.A.9.1) subfamily. Expressed in the body wall muscle.

It is found in the postsynaptic cell membrane. The protein localises to the cell membrane. Functionally, after binding acetylcholine, the AChR responds by an extensive change in conformation that affects all subunits and leads to opening of an ion-conducting channel across the plasma membrane. A subunit of the levamisole-insensitive nicotinic receptor. This chain is Acetylcholine receptor subunit alpha-type acr-16 (acr-16), found in Caenorhabditis elegans.